The primary structure comprises 264 residues: Putative hydroxypyruvate isomerase (264 aa).

Residues glutamate 145 and glutamate 243 each act as proton donor/acceptor in the active site.

Belongs to the hyi family.

It carries out the reaction 3-hydroxypyruvate = 2-hydroxy-3-oxopropanoate. In terms of biological role, catalyzes the reversible isomerization between hydroxypyruvate and 2-hydroxy-3-oxopropanoate (also termed tartronate semialdehyde). This is Putative hydroxypyruvate isomerase (Gip) from Drosophila melanogaster (Fruit fly).